The chain runs to 210 residues: Ras-related protein Rab-43 (210 aa).

23 to 30 serves as a coordination point for GTP; that stretch reads GDASVGKT. Positions 45–53 match the Effector region motif; sequence QGSTIGVDF. Phosphoserine is present on serine 47. Residue 71-75 coordinates GTP; that stretch reads DTAGQ. Threonine 80 is subject to Phosphothreonine. GTP-binding positions include 129–132 and 161–162; these read NKSD and AK. S-geranylgeranyl cysteine attachment occurs at residues cysteine 208 and cysteine 210. Cysteine 210 bears the Cysteine methyl ester mark.

The protein belongs to the small GTPase superfamily. Rab family. In terms of assembly, interacts with GDI1, GDI2 and CHM; phosphorylation at Thr-80 disrupts these interactions.

Its subcellular location is the cytoplasmic vesicle. The protein resides in the phagosome. It is found in the phagosome membrane. It localises to the golgi apparatus. The protein localises to the trans-Golgi network membrane. Its subcellular location is the trans-Golgi network. Functionally, the small GTPases Rab are key regulators of intracellular membrane trafficking, from the formation of transport vesicles to their fusion with membranes. Rabs cycle between an inactive GDP-bound form and an active GTP-bound form that is able to recruit to membranes different set of downstream effectors directly responsible for vesicle formation, movement, tethering and fusion. The low intrinsic GTPase activity of RAB43 is activated by USP6NL. Involved in retrograde transport from the endocytic pathway to the Golgi apparatus. Involved in the transport of Shiga toxin from early and recycling endosomes to the trans-Golgi network. Required for the structural integrity of the Golgi complex. Plays a role in the maturation of phagosomes that engulf pathogens, such as S.aureus and Mycobacterium. This Rattus norvegicus (Rat) protein is Ras-related protein Rab-43 (Rab43).